Reading from the N-terminus, the 185-residue chain is MKSGEKDYSIKEAMIFSQRIAQLSKALWKSVEKDWQQWIKPYDLNINEHHILSIAYHLEGASISEIAKFGVMHVSTAFNFSKKLEERGYLVFSKKEDDKRNTYIEITEKGEELLLKLMEEYNPENNSVFNGALALRNFYGKFPENIELIAILRNIYGQDFIDIFEKSLENIEENFTEQEQKLVKK.

An HTH marR-type domain is found at 13 to 157; it reads AMIFSQRIAQ…LIAILRNIYG (145 aa). Residues 63 to 86 constitute a DNA-binding region (H-T-H motif); the sequence is ISEIAKFGVMHVSTAFNFSKKLEE.

As to quaternary structure, homodimer.

Functionally, negative regulator of protease production and sporulation. The chain is HTH-type transcriptional regulator Hpr from Bacillus cytotoxicus (strain DSM 22905 / CIP 110041 / 391-98 / NVH 391-98).